Consider the following 210-residue polypeptide: Uracil phosphoribosyltransferase (210 aa).

Residues Arg78, Arg103, and 130-138 (DPMLATGGT) contribute to the 5-phospho-alpha-D-ribose 1-diphosphate site. Residues Ile193 and 198–200 (GDA) contribute to the uracil site. Residue Asp199 coordinates 5-phospho-alpha-D-ribose 1-diphosphate.

This sequence belongs to the UPRTase family. It depends on Mg(2+) as a cofactor.

The catalysed reaction is UMP + diphosphate = 5-phospho-alpha-D-ribose 1-diphosphate + uracil. It functions in the pathway pyrimidine metabolism; UMP biosynthesis via salvage pathway; UMP from uracil: step 1/1. Its activity is regulated as follows. Allosterically activated by GTP. In terms of biological role, catalyzes the conversion of uracil and 5-phospho-alpha-D-ribose 1-diphosphate (PRPP) to UMP and diphosphate. This chain is Uracil phosphoribosyltransferase, found in Xanthomonas axonopodis pv. citri (strain 306).